We begin with the raw amino-acid sequence, 326 residues long: tRNA-modifying protein YgfZ (326 aa).

Folate-binding residues include Trp27 and Trp189.

The protein belongs to the tRNA-modifying YgfZ family.

It is found in the cytoplasm. In terms of biological role, folate-binding protein involved in regulating the level of ATP-DnaA and in the modification of some tRNAs. It is probably a key factor in regulatory networks that act via tRNA modification, such as initiation of chromosomal replication. The chain is tRNA-modifying protein YgfZ from Escherichia coli O17:K52:H18 (strain UMN026 / ExPEC).